A 178-amino-acid chain; its full sequence is NAD(P)H-quinone oxidoreductase subunit 6, chloroplastic (178 aa).

A run of 5 helical transmembrane segments spans residues 10–30 (FILVFLGSGLILGGLGVVLFT), 32–52 (PIYSAFSLGLVLVCISLFYIL), 61–81 (AQLLIYVGAVNVLIIFAVMFM), 94–114 (LWTIGDGLTSLVCTSIFFSLI), and 154–174 (FFLPFELVSIILLVALIGAIA).

This sequence belongs to the complex I subunit 6 family. In terms of assembly, NDH is composed of at least 16 different subunits, 5 of which are encoded in the nucleus.

It is found in the plastid. The protein localises to the chloroplast thylakoid membrane. The catalysed reaction is a plastoquinone + NADH + (n+1) H(+)(in) = a plastoquinol + NAD(+) + n H(+)(out). It carries out the reaction a plastoquinone + NADPH + (n+1) H(+)(in) = a plastoquinol + NADP(+) + n H(+)(out). Functionally, NDH shuttles electrons from NAD(P)H:plastoquinone, via FMN and iron-sulfur (Fe-S) centers, to quinones in the photosynthetic chain and possibly in a chloroplast respiratory chain. The immediate electron acceptor for the enzyme in this species is believed to be plastoquinone. Couples the redox reaction to proton translocation, and thus conserves the redox energy in a proton gradient. The sequence is that of NAD(P)H-quinone oxidoreductase subunit 6, chloroplastic (ndhG) from Citrus sinensis (Sweet orange).